The sequence spans 272 residues: Shikimate dehydrogenase (NADP(+)) (272 aa).

Shikimate-binding positions include 14-16 (SKS) and Thr-61. Lys-65 (proton acceptor) is an active-site residue. Glu-77 lines the NADP(+) pocket. Positions 86 and 102 each coordinate shikimate. Residues 126–130 (GAGGA), 149–154 (NRTVSR), and Met-213 contribute to the NADP(+) site. Tyr-215 serves as a coordination point for shikimate. Gly-237 contacts NADP(+).

Belongs to the shikimate dehydrogenase family. As to quaternary structure, homodimer.

It carries out the reaction shikimate + NADP(+) = 3-dehydroshikimate + NADPH + H(+). Its pathway is metabolic intermediate biosynthesis; chorismate biosynthesis; chorismate from D-erythrose 4-phosphate and phosphoenolpyruvate: step 4/7. Its function is as follows. Involved in the biosynthesis of the chorismate, which leads to the biosynthesis of aromatic amino acids. Catalyzes the reversible NADPH linked reduction of 3-dehydroshikimate (DHSA) to yield shikimate (SA). This chain is Shikimate dehydrogenase (NADP(+)), found in Shigella sonnei (strain Ss046).